Reading from the N-terminus, the 494-residue chain is MSDLNALTIADARDALRKGEVTSVDLTQACLSAIDQADALGTFVHKTPDLALERAKAADARIAEGDAPDMCGIPVGIKDLFCTEGVPSQAASRILDGFKPEYESTVSGKLRDAGAVMLGKLNMDEFAMGSSNETSVYGNAVNPWRAGNSDAALTPGGSSGGSASAVAGDLCLAATGTDTGGSIRQPAAFTGIVGLKPTYGRCSRWGIVAFASSLDQAGPMTKTVRDAAIMGRAMMGYDAKDSTSANIDVPDFEAMLTGDIRGKIIGIPKEYRMDGMPDEIETLWADGTAMLKDAGAVIRDISLPHTKYALPAYYVIAPAEASSNLARYDGVRFGYRADMAPGDGITEMYEKTRAEGFGPEVQRRVMIGTYVLSAGFYDAYYNRARRVRALIKRDFDEVFAAGVDAILTPATPSAAFELGKEVSDPVEMYLNDVFTVTVNLAGLPGVAVPTGVDRNGLPLGLQLIGKPWEEGELLNTAYALEAAAGFVAKPARWW.

Residues Lys-78 and Ser-158 each act as charge relay system in the active site. Catalysis depends on Ser-182, which acts as the Acyl-ester intermediate.

Belongs to the amidase family. GatA subfamily. Heterotrimer of A, B and C subunits.

It carries out the reaction L-glutamyl-tRNA(Gln) + L-glutamine + ATP + H2O = L-glutaminyl-tRNA(Gln) + L-glutamate + ADP + phosphate + H(+). Its function is as follows. Allows the formation of correctly charged Gln-tRNA(Gln) through the transamidation of misacylated Glu-tRNA(Gln) in organisms which lack glutaminyl-tRNA synthetase. The reaction takes place in the presence of glutamine and ATP through an activated gamma-phospho-Glu-tRNA(Gln). The sequence is that of Glutamyl-tRNA(Gln) amidotransferase subunit A from Jannaschia sp. (strain CCS1).